The primary structure comprises 242 residues: DnaJ homolog subfamily B member 3 (242 aa).

The J domain maps to 1-69 (MVDYYEVLGV…RKREVYDRCG (69 aa)).

As to expression, testis specific. Expression is confined to the germline without any contribution of the somatic components.

Its function is as follows. May operate as a co-chaperone of the male germ cell- and haploid stage-specific Hsp70 proteins. The chain is DnaJ homolog subfamily B member 3 (Dnajb3) from Mus musculus (Mouse).